The following is an 814-amino-acid chain: DNA gyrase subunit A (814 aa).

One can recognise a Topo IIA-type catalytic domain in the interval 32–499 (LPDVRDGLKP…GVIEFREEDL (468 aa)). The O-(5'-phospho-DNA)-tyrosine intermediate role is filled by Tyr120. A GyrA-box motif is present at residues 526 to 532 (QHRAGRG).

The protein belongs to the type II topoisomerase GyrA/ParC subunit family. Heterotetramer, composed of two GyrA and two GyrB chains. In the heterotetramer, GyrA contains the active site tyrosine that forms a transient covalent intermediate with DNA, while GyrB binds cofactors and catalyzes ATP hydrolysis.

It localises to the cytoplasm. It carries out the reaction ATP-dependent breakage, passage and rejoining of double-stranded DNA.. Its function is as follows. A type II topoisomerase that negatively supercoils closed circular double-stranded (ds) DNA in an ATP-dependent manner to modulate DNA topology and maintain chromosomes in an underwound state. Negative supercoiling favors strand separation, and DNA replication, transcription, recombination and repair, all of which involve strand separation. Also able to catalyze the interconversion of other topological isomers of dsDNA rings, including catenanes and knotted rings. Type II topoisomerases break and join 2 DNA strands simultaneously in an ATP-dependent manner. This chain is DNA gyrase subunit A, found in Dehalogenimonas lykanthroporepellens (strain ATCC BAA-1523 / JCM 15061 / BL-DC-9).